Here is a 157-residue protein sequence, read N- to C-terminus: Ribosome maturation factor RimP (157 aa).

Belongs to the RimP family.

The protein localises to the cytoplasm. In terms of biological role, required for maturation of 30S ribosomal subunits. This chain is Ribosome maturation factor RimP, found in Synechococcus sp. (strain CC9311).